A 158-amino-acid chain; its full sequence is Transcription factor BTF3 homolog 4 (158 aa).

The region spanning 33 to 98 (TADDKKLQSS…AETKQLTEML (66 aa)) is the NAC-A/B domain. The tract at residues 125–158 (LDNKAPKAEDIDEEDDDVPDLVENFDEASKNEAN) is disordered. Acidic residues predominate over residues 134–150 (DIDEEDDDVPDLVENFD).

The protein belongs to the NAC-beta family.

This Danio rerio (Zebrafish) protein is Transcription factor BTF3 homolog 4 (btf3l4).